A 770-amino-acid chain; its full sequence is Jhy protein (770 aa).

Disordered stretches follow at residues 1-249 (MNKY…SKQY), 295-438 (TVQN…SFVS), 493-527 (HRHE…PQAE), 595-647 (ESQL…KRDV), and 708-740 (DYAK…KEGG). Residues 57-71 (SWSDIKDQIQDKDME) show a composition bias toward basic and acidic residues. The span at 72 to 85 (PDSLEEDSPSETEE) shows a compositional bias: acidic residues. Residues 112 to 134 (HQVEDKYSDLRYDPNWKNKREEG) are compositionally biased toward basic and acidic residues. A compositionally biased stretch (low complexity) spans 218-229 (SGLSQYLKSSSS). Over residues 295-314 (TVQNDKEVENTFMDPEDKWH) the composition is skewed to basic and acidic residues. Polar residues predominate over residues 340-354 (RGQSSDAANGQQPSR). Residues 355-370 (RTAKARVRKQRKHQKG) are compositionally biased toward basic residues. Residues 383 to 398 (QNNQNNPFQQPQNQRQ) are compositionally biased toward low complexity. Residues 410-438 (AQTNASNPNLQDARTLTHNPKVTSDSFVS) are compositionally biased toward polar residues. A compositionally biased stretch (basic and acidic residues) spans 493-509 (HRHESPSQRAPQSDHHM). Composition is skewed to basic residues over residues 510 to 521 (NTHRSTKTKKPA) and 625 to 642 (GKRH…LKGY).

As to expression, expressed in the brain, specifically in hypothalamus, pineal gland, and ependymal cells of the aqueduct of Sylvius, as well as in the choroid plexus of the third ventricle. Expressed in the ependymal cells lining the lateral ventricles (at protein level).

Functionally, required for the normal development of cilia in brain ependymal cells lining the ventricular surfaces. The protein is Jhy protein of Mus musculus (Mouse).